A 335-amino-acid chain; its full sequence is 4-hydroxythreonine-4-phosphate dehydrogenase (335 aa).

Residues histidine 135 and threonine 136 each coordinate substrate. 3 residues coordinate a divalent metal cation: histidine 165, histidine 210, and histidine 265. Positions 273, 282, and 291 each coordinate substrate.

This sequence belongs to the PdxA family. As to quaternary structure, homodimer. The cofactor is Zn(2+). It depends on Mg(2+) as a cofactor. Co(2+) is required as a cofactor.

It is found in the cytoplasm. The catalysed reaction is 4-(phosphooxy)-L-threonine + NAD(+) = 3-amino-2-oxopropyl phosphate + CO2 + NADH. Its pathway is cofactor biosynthesis; pyridoxine 5'-phosphate biosynthesis; pyridoxine 5'-phosphate from D-erythrose 4-phosphate: step 4/5. Its function is as follows. Catalyzes the NAD(P)-dependent oxidation of 4-(phosphooxy)-L-threonine (HTP) into 2-amino-3-oxo-4-(phosphooxy)butyric acid which spontaneously decarboxylates to form 3-amino-2-oxopropyl phosphate (AHAP). In Saccharophagus degradans (strain 2-40 / ATCC 43961 / DSM 17024), this protein is 4-hydroxythreonine-4-phosphate dehydrogenase.